The sequence spans 474 residues: HTH-type transcriptional regulator RamB (474 aa).

The region spanning 10–64 (VRQLRNERGFSQAALAQMLEISPSYLNQIEHDVRPLTVAVLLRITEVFGVDATFF) is the HTH cro/C1-type domain. Residues 21–40 (QAALAQMLEISPSYLNQIEH) constitute a DNA-binding region (H-T-H motif).

This sequence belongs to the short-chain fatty acyl-CoA assimilation regulator (ScfR) family.

Involved in the control of the glyoxylate cycle. RamB negatively controls the expression of icl expression during growth on acetate as the sole carbon source. This Mycobacterium tuberculosis (strain CDC 1551 / Oshkosh) protein is HTH-type transcriptional regulator RamB.